The chain runs to 130 residues: Small ribosomal subunit protein uS9 (130 aa).

The protein belongs to the universal ribosomal protein uS9 family.

This chain is Small ribosomal subunit protein uS9, found in Burkholderia cenocepacia (strain HI2424).